The chain runs to 342 residues: S-adenosylmethionine:tRNA ribosyltransferase-isomerase (342 aa).

The protein belongs to the QueA family. As to quaternary structure, monomer.

The protein localises to the cytoplasm. The catalysed reaction is 7-aminomethyl-7-carbaguanosine(34) in tRNA + S-adenosyl-L-methionine = epoxyqueuosine(34) in tRNA + adenine + L-methionine + 2 H(+). It participates in tRNA modification; tRNA-queuosine biosynthesis. In terms of biological role, transfers and isomerizes the ribose moiety from AdoMet to the 7-aminomethyl group of 7-deazaguanine (preQ1-tRNA) to give epoxyqueuosine (oQ-tRNA). The chain is S-adenosylmethionine:tRNA ribosyltransferase-isomerase from Streptococcus pyogenes serotype M6 (strain ATCC BAA-946 / MGAS10394).